The primary structure comprises 784 residues: E3 UFM1-protein ligase 1 homolog (784 aa).

The segment at 401–481 is disordered; it reads QKGNSSAQDL…GGGGGGNKKT (81 aa).

Belongs to the UFL1 family.

Its function is as follows. E3 UFM1-protein ligase that mediates ufmylation of target proteins. The protein is E3 UFM1-protein ligase 1 homolog of Drosophila ananassae (Fruit fly).